Consider the following 437-residue polypeptide: Adenylosuccinate synthetase (437 aa).

GTP contacts are provided by residues 12-18 (GDEGKGK) and 40-42 (GHT). D13 serves as the catalytic Proton acceptor. 2 residues coordinate Mg(2+): D13 and G40. IMP is bound by residues 13–16 (DEGK), 38–41 (NAGH), T128, R142, Q223, T238, and R302. H41 serves as the catalytic Proton donor. 298–304 (TTTGRRR) contacts substrate. Residues R304, 330–332 (KLD), and 412–414 (SLG) each bind GTP.

The protein belongs to the adenylosuccinate synthetase family. In terms of assembly, homodimer. Mg(2+) serves as cofactor.

Its subcellular location is the cytoplasm. The enzyme catalyses IMP + L-aspartate + GTP = N(6)-(1,2-dicarboxyethyl)-AMP + GDP + phosphate + 2 H(+). The protein operates within purine metabolism; AMP biosynthesis via de novo pathway; AMP from IMP: step 1/2. Its function is as follows. Plays an important role in the de novo pathway of purine nucleotide biosynthesis. Catalyzes the first committed step in the biosynthesis of AMP from IMP. This is Adenylosuccinate synthetase from Prochlorococcus marinus (strain NATL1A).